The chain runs to 138 residues: Large ribosomal subunit protein uL16 (138 aa).

It belongs to the universal ribosomal protein uL16 family. As to quaternary structure, part of the 50S ribosomal subunit.

In terms of biological role, binds 23S rRNA and is also seen to make contacts with the A and possibly P site tRNAs. The sequence is that of Large ribosomal subunit protein uL16 from Rhodospirillum rubrum (strain ATCC 11170 / ATH 1.1.1 / DSM 467 / LMG 4362 / NCIMB 8255 / S1).